The following is a 323-amino-acid chain: o-succinylbenzoate synthase (323 aa).

Lys134 functions as the Proton donor in the catalytic mechanism. 3 residues coordinate Mg(2+): Asp162, Glu191, and Asp214. Lys236 serves as the catalytic Proton acceptor.

Belongs to the mandelate racemase/muconate lactonizing enzyme family. MenC type 1 subfamily. The cofactor is a divalent metal cation.

The enzyme catalyses (1R,6R)-6-hydroxy-2-succinyl-cyclohexa-2,4-diene-1-carboxylate = 2-succinylbenzoate + H2O. Its pathway is quinol/quinone metabolism; 1,4-dihydroxy-2-naphthoate biosynthesis; 1,4-dihydroxy-2-naphthoate from chorismate: step 4/7. It participates in quinol/quinone metabolism; menaquinone biosynthesis. In terms of biological role, converts 2-succinyl-6-hydroxy-2,4-cyclohexadiene-1-carboxylate (SHCHC) to 2-succinylbenzoate (OSB). This chain is o-succinylbenzoate synthase, found in Yersinia pseudotuberculosis serotype IB (strain PB1/+).